The primary structure comprises 175 residues: Small ribosomal subunit protein bS16 (175 aa).

Belongs to the bacterial ribosomal protein bS16 family.

The protein is Small ribosomal subunit protein bS16 of Cytophaga hutchinsonii (strain ATCC 33406 / DSM 1761 / CIP 103989 / NBRC 15051 / NCIMB 9469 / D465).